The chain runs to 708 residues: Elongation factor G (708 aa).

Positions 9 to 289 constitute a tr-type G domain; it reads MFTRNIGIMA…AVCAFLPSPE (281 aa). Residues 18–25, 86–90, and 140–143 each bind GTP; these read AHIDAGKT, DTPGH, and NKMD.

This sequence belongs to the TRAFAC class translation factor GTPase superfamily. Classic translation factor GTPase family. EF-G/EF-2 subfamily.

It is found in the cytoplasm. Catalyzes the GTP-dependent ribosomal translocation step during translation elongation. During this step, the ribosome changes from the pre-translocational (PRE) to the post-translocational (POST) state as the newly formed A-site-bound peptidyl-tRNA and P-site-bound deacylated tRNA move to the P and E sites, respectively. Catalyzes the coordinated movement of the two tRNA molecules, the mRNA and conformational changes in the ribosome. This is Elongation factor G from Parabacteroides distasonis (strain ATCC 8503 / DSM 20701 / CIP 104284 / JCM 5825 / NCTC 11152).